Here is an 859-residue protein sequence, read N- to C-terminus: MFTLAEVASLNDIQPTYRILKPWWDVFMDYLAVVMLMVAIFAGTMQLTKDQVVCLPVLPSPANSKAHTPPGNADITTEVPRMETATHQDQNGQTTTNDVAFGTSAVTPDIPLQATHPHAESTLPNQEAKKEKRDPTGRKTNLDFQQYVFINQMCYHLALPWYSKYFPYLALIHTIILMVSSNFWFKYPKTCSKVEHFVSILGKCFESPWTTKALSETACEDSEENKQRITGAQTLPKHVSTSSDEGSPSASTPMINKTGFKFSAEKPVIEVPSMTILDKKDGEQAKALFEKVRKFRAHVEDSDLIYKLYVVQTLIKTAKFIFILCYTANFVNAISFEHVCKPKVEHLTGYEVFECTHNMAYMLKKLLISYISIICVYGFICLYTLFWLFRIPLKEYSFEKVREESSFSDIPDVKNDFAFLLHMVDQYDQLYSKRFGVFLSEVSENKLREISLNHEWTFEKLRQHVSRNAQDKQELHLFMLSGVPDAVFDLTDLDVLKLELIPEAKIPAKISQMTNLQELHLCHCPAKVEQTAFSFLRDHLRCLHVKFTDVAEIPAWVYLLKNLRELYLIGNLNSENNKMIGLESLRELRHLKILHVKSNLTKVPSNITDVAPHLTKLVIHNDGTKLLVLNSLKKMMNVAELELQNCELERIPHAIFSLSNLQELDLKSNNIRTIEEIISFQHLKRLTCLKLWHNKIVAIPPSITHVKNLESLYFSNNKLESLPTAVFSLQKLRCLDVSYNNISTIPIEIGLLQNLQHLHITGNKVDILPKQLFKCVKLRTLNLGQNCIASLPEKISQLTQLTQLELKGNCLDRLPAQLGQCRMLKKSGLVVEDQLFDTLPLEVKEALNQDVNVPFANGI.

Topologically, residues 1–22 are cytoplasmic; it reads MFTLAEVASLNDIQPTYRILKP. A helical membrane pass occupies residues 23–48; sequence WWDVFMDYLAVVMLMVAIFAGTMQLT. Residues 49-164 are Extracellular-facing; it reads KDQVVCLPVL…YHLALPWYSK (116 aa). Cysteines 54 and 355 form a disulfide. The interval 110 to 138 is disordered; that stretch reads IPLQATHPHAESTLPNQEAKKEKRDPTGR. Residues 127-138 show a composition bias toward basic and acidic residues; that stretch reads EAKKEKRDPTGR. The chain crosses the membrane as a helical span at residues 165-183; sequence YFPYLALIHTIILMVSSNF. Residues 184-309 are Cytoplasmic-facing; that stretch reads WFKYPKTCSK…EDSDLIYKLY (126 aa). The tract at residues 222 to 252 is disordered; that stretch reads SEENKQRITGAQTLPKHVSTSSDEGSPSAST. Polar residues predominate over residues 228 to 252; that stretch reads RITGAQTLPKHVSTSSDEGSPSAST. Phosphoserine is present on residues S242, S243, and S247. A helical transmembrane segment spans residues 310–331; the sequence is VVQTLIKTAKFIFILCYTANFV. The Extracellular portion of the chain corresponds to 332 to 361; the sequence is NAISFEHVCKPKVEHLTGYEVFECTHNMAY. A helical membrane pass occupies residues 362–387; that stretch reads MLKKLLISYISIICVYGFICLYTLFW. The Cytoplasmic segment spans residues 388–859; that stretch reads LFRIPLKEYS…DVNVPFANGI (472 aa). LRR repeat units follow at residues 515–535, 539–560, 562–583, 590–610, 613–633, 637–658, 660–681, 685–706, 708–729, 731–752, 754–775, 777–798, and 800–821; these read NLQE…AFSF, HLRC…VYLL, NLRE…IGLE, HLKI…ITDV, HLTK…NSLK, NVAE…IFSL, NLQE…ISFQ, RLTC…ITHV, NLES…VFSL, KLRC…IGLL, NLQH…LFKC, KLRT…ISQL, and QLTQ…LGQC.

Belongs to the LRRC8 family. In terms of assembly, heterohexamer; oligomerizes with other LRRC8 proteins (LRRC8A, LRRC8B, LRRC8C and/or LRRC8E) to form a heterohexamer. In vivo, the subunit composition may depend primarily on expression levels, and heterooligomeric channels containing various proportions of the different LRRC8 proteins may coexist. As to expression, expressed in pancreatic beta cells. Also expressed in glucagon-secreting pancreatic alpha cells.

It localises to the cell membrane. The protein resides in the endoplasmic reticulum membrane. It catalyses the reaction chloride(in) = chloride(out). It carries out the reaction iodide(out) = iodide(in). The enzyme catalyses taurine(out) = taurine(in). Its function is as follows. Non-essential component of the volume-regulated anion channel (VRAC, also named VSOAC channel), an anion channel required to maintain a constant cell volume in response to extracellular or intracellular osmotic changes. The VRAC channel conducts iodide better than chloride and can also conduct organic osmolytes like taurine. Plays a redundant role in the efflux of amino acids, such as aspartate, in response to osmotic stress family member (LRRC8B, LRRC8C, LRRC8D or LRRC8E); channel characteristics depend on the precise subunit composition. Also acts as a regulator of glucose-sensing in pancreatic beta cells: VRAC currents, generated in response to hypotonicity- or glucose-induced beta cell swelling, depolarize cells, thereby causing electrical excitation, leading to increase glucose sensitivity and insulin secretion. VRAC channels containing LRRC8D inhibit transport of immunoreactive cyclic dinucleotide GMP-AMP (2'-3'-cGAMP), an immune messenger produced in response to DNA virus in the cytosol. The polypeptide is Volume-regulated anion channel subunit LRRC8D (Mus musculus (Mouse)).